An 89-amino-acid polypeptide reads, in one-letter code: DNA/RNA-binding protein Alba 2 (89 aa).

The residue at position 12 (Lys-12) is an N6-acetyllysine. The Zn(2+) site is built by Lys-14, Asp-18, and Asp-22.

The protein belongs to the histone-like Alba family. Forms homodimers and homotetramers. Homodimer at pH below 6.0. Forms homotetramers and higher order homooligomers at near the growth temperature of 80 degrees Celsius and pH 7.0. Interacts with Alba 1; heterodimers lack cooperative DNA-binding behavior and result in more compact chromatin structures compared to Alba 1 homodimers. Acetylated. Acetylation at Lys-12 decreases DNA-binding affinity.

It is found in the cytoplasm. The protein localises to the chromosome. Functionally, binds single-stranded DNA, RNA and double-stranded DNA. Involved in DNA compaction. The chain is DNA/RNA-binding protein Alba 2 from Saccharolobus solfataricus (strain ATCC 35092 / DSM 1617 / JCM 11322 / P2) (Sulfolobus solfataricus).